A 537-amino-acid polypeptide reads, in one-letter code: Chaperonin GroEL (537 aa).

Residues 29-32, 86-90, Gly-413, and Asp-492 contribute to the ATP site; these read TLGP and DGTTT.

Belongs to the chaperonin (HSP60) family. In terms of assembly, forms a cylinder of 14 subunits composed of two heptameric rings stacked back-to-back. Interacts with the co-chaperonin GroES.

Its subcellular location is the cytoplasm. It carries out the reaction ATP + H2O + a folded polypeptide = ADP + phosphate + an unfolded polypeptide.. Together with its co-chaperonin GroES, plays an essential role in assisting protein folding. The GroEL-GroES system forms a nano-cage that allows encapsulation of the non-native substrate proteins and provides a physical environment optimized to promote and accelerate protein folding. In Dehalococcoides mccartyi (strain CBDB1), this protein is Chaperonin GroEL.